Reading from the N-terminus, the 203-residue chain is Phosphatidylglycerophosphatase B (203 aa).

A topological domain (cytoplasmic) is located at residue methionine 1. The chain crosses the membrane as a helical span at residues 2 to 17 (YKPVSLFLFFLILAAA). The Extracellular segment spans residues 18–55 (IHTNAVQSADEAISKAAVLIRQPWLNEVMTGITHLGAS). The helical transmembrane segment at 56-74 (SFLLPLIVIIGAGMFFYRK) threads the bilayer. At 75 to 78 (TWDG) the chain is on the cytoplasmic side. The helical transmembrane segment at 79–99 (LLMLLVFGTDRLLNKVLKEWI) threads the bilayer. Residues 96–104 (KEWIERVRP) are phosphatase sequence motif I. Topologically, residues 100–119 (ERVRPDFAPLVHESSFSFPS) are extracellular. The interval 118 to 121 (PSGH) is phosphatase sequence motif II. A helical transmembrane segment spans residues 120-139 (GHSMNAACVYPVIAYFLVKH). Histidine 121 functions as the Proton donors in the catalytic mechanism. The Cytoplasmic portion of the chain corresponds to 140–146 (LPFLSKH). The chain crosses the membrane as a helical span at residues 147–167 (KKMVYIIAGVIAVLVGISRVY). A phosphatase sequence motif III region spans residues 164–175 (SRVYLGVHFVTD). Topologically, residues 168–172 (LGVHF) are extracellular. Histidine 171 functions as the Nucleophile in the catalytic mechanism. A helical membrane pass occupies residues 173–196 (VTDVLGGFSLGLLLFFLVKGFDEK). Residues 197 to 203 (IKRFRQK) lie on the Cytoplasmic side of the membrane.

This sequence belongs to the PA-phosphatase related phosphoesterase family.

It localises to the cell membrane. It carries out the reaction a 1,2-diacyl-sn-glycero-3-phospho-(1'-sn-glycero-3'-phosphate) + H2O = a 1,2-diacyl-sn-glycero-3-phospho-(1'-sn-glycerol) + phosphate. Its function is as follows. Catalyzes the dephosphorylation of phosphatidylglycerophosphate (PGP) to phosphatidylglycerol. Also has undecaprenyl pyrophosphate phosphatase activity, required for the biosynthesis of the lipid carrier undecaprenyl phosphate. The chain is Phosphatidylglycerophosphatase B from Bacillus subtilis (strain 168).